Reading from the N-terminus, the 308-residue chain is Ectoine dioxygenase (308 aa).

Gln-131 provides a ligand contact to L-ectoine. Position 137 (Lys-137) interacts with 2-oxoglutarate. His-148, Asp-150, and His-249 together coordinate Fe cation.

It belongs to the PhyH family. EctD subfamily. Homodimer. It depends on Fe(2+) as a cofactor.

The enzyme catalyses L-ectoine + 2-oxoglutarate + O2 = 5-hydroxyectoine + succinate + CO2. Involved in the biosynthesis of 5-hydroxyectoine, called compatible solute, which helps organisms to survive extreme osmotic stress by acting as a highly soluble organic osmolyte. Catalyzes the 2-oxoglutarate-dependent selective hydroxylation of L-ectoine to yield (4S,5S)-5-hydroxyectoine. This chain is Ectoine dioxygenase, found in Bordetella bronchiseptica (strain ATCC BAA-588 / NCTC 13252 / RB50) (Alcaligenes bronchisepticus).